The following is a 203-amino-acid chain: Cbp/p300-interacting transactivator 1 (203 aa).

2 disordered regions span residues 1–24 (MPTM…DANQ) and 51–86 (TANG…PSFN). Residues 61–84 (PTSSSGSTSPIGSPTATPSSKPPS) show a composition bias toward low complexity. Positions 168-177 (LMSLVVELGL) match the Nuclear export signal motif.

It belongs to the CITED family. Homodimer. Binds to RBM14. Interacts (via N-terminus) with HSPA8; the interaction suppresses the association of CITED1 with p300/CBP and SMAD-mediated transcription transactivation. Interacts (via C-terminus) with TOX3 (via HGM box); the interaction increases estrogen-response element (ERE)-dependent transcription and protection against cell death. Interacts with ESR1; the interaction occurs in a estrogen-dependent manner. Interacts (unphosphorylated form preferentially and via C-terminus) with EP300. Interacts (via C-terminus) with CREBBP. Interacts with EGR2. Post-translationally, phosphorylated. Phosphorylation changes in a cell cycle-dependent manner and reduces its transcriptional cofactor activity. As to expression, expressed in calvarial osteoblasts. Expressed in nulliparous mammary epithelial cells; absent in pregnant mice and in lacting mammary glands. Also expressed in mammary tumors (at protein level). Expressed only in melanocytes and testis. Expressed at high levels in the strongly pigmented melanoma cells but at low levels in the weakly pigmented cells.

It localises to the nucleus. The protein localises to the cytoplasm. Transcriptional coactivator of the p300/CBP-mediated transcription complex. Enhances SMAD-mediated transcription by strengthening the functional link between the DNA-binding SMAD transcription factors and the p300/CBP transcription coactivator complex. Stimulates estrogen-dependent transactivation activity mediated by estrogen receptors signaling; stabilizes the interaction of estrogen receptor ESR1 and histone acetyltransferase EP300. Positively regulates TGF-beta signaling through its association with the SMAD/p300/CBP-mediated transcriptional coactivator complex. Induces transcription from estrogen-responsive promoters and protection against cell death. Potentiates EGR2-mediated transcriptional activation activity from the ERBB2 promoter. Acts as an inhibitor of osteoblastic mineralization through a cAMP-dependent parathyroid hormone receptor signaling. May play a role in pigmentation of melanocytes. Associates with chromatin to the estrogen-responsive TGF-alpha promoter region in a estrogen-dependent manner. The chain is Cbp/p300-interacting transactivator 1 (Cited1) from Mus musculus (Mouse).